The sequence spans 488 residues: MNETVVADPMAQANPASVFDLGLPCSTRYRLLKAMDPQDQYEACRQLLDIWRISNIKKLEKFFLWICVYDVVLNLHLKYDILELIITTTIVPPVGTVKFHRTEHAAANVLYLVQERAFDSDQYWVVLKKILHLYRTAFGLDKVDKVLRNLIAVGFRKQGLANPFGKIFPLVLEFKQCPFFVDLCAFIFDTCGAKLSVKNRLLLLQILYTDENRFMDPLVQLVHQCPQLNFRLEACDILYGNGSDEVKKKAKRWIKTLLPDGGDYVQNPENVHLDSVANSVDETLKILVEKNRKKTAPDNLYALLCHHFEKSEKIVASLTRIFQYDFLKFSSLNLTLGEVLAQIYLTIDGQPEAVRDQLMVRLGQELRDAYDTCSKGYVTRLVNVVSGFNLYGESSLGICTSIEDEIYHLYSTTVNGLVQNSPANVRDTLIQQLAVPPDQSAERRELIEFLRPNWSLIWTTIQNRFAGDVCPNQLDLHCRNAMAKYDGN.

The protein belongs to the IIV-6 467R family.

This is an uncharacterized protein from Invertebrate iridescent virus 3 (IIV-3).